A 79-amino-acid chain; its full sequence is uncharacterized protein (79 aa).

This is an uncharacterized protein from Rhizobium leguminosarum.